Reading from the N-terminus, the 153-residue chain is 6,7-dimethyl-8-ribityllumazine synthase (153 aa).

5-amino-6-(D-ribitylamino)uracil-binding positions include Phe21, 55-57 (AFE), and 79-81 (CVI). 84–85 (AT) lines the (2S)-2-hydroxy-3-oxobutyl phosphate pocket. His87 functions as the Proton donor in the catalytic mechanism. Phe112 contacts 5-amino-6-(D-ribitylamino)uracil. Arg126 lines the (2S)-2-hydroxy-3-oxobutyl phosphate pocket.

This sequence belongs to the DMRL synthase family. Forms an icosahedral capsid composed of 60 subunits, arranged as a dodecamer of pentamers.

The enzyme catalyses (2S)-2-hydroxy-3-oxobutyl phosphate + 5-amino-6-(D-ribitylamino)uracil = 6,7-dimethyl-8-(1-D-ribityl)lumazine + phosphate + 2 H2O + H(+). It functions in the pathway cofactor biosynthesis; riboflavin biosynthesis; riboflavin from 2-hydroxy-3-oxobutyl phosphate and 5-amino-6-(D-ribitylamino)uracil: step 1/2. In terms of biological role, catalyzes the formation of 6,7-dimethyl-8-ribityllumazine by condensation of 5-amino-6-(D-ribitylamino)uracil with 3,4-dihydroxy-2-butanone 4-phosphate. This is the penultimate step in the biosynthesis of riboflavin. The sequence is that of 6,7-dimethyl-8-ribityllumazine synthase from Staphylococcus epidermidis (strain ATCC 35984 / DSM 28319 / BCRC 17069 / CCUG 31568 / BM 3577 / RP62A).